The primary structure comprises 623 residues: Probable lysophospholipase 5 (623 aa).

Positions 1–19 (MKLSSFGLFLALQLLPALG) are cleaved as a signal peptide. The PLA2c domain maps to 67–607 (ACPSGSLLRP…NQYCWNGTIA (541 aa)). 19 N-linked (GlcNAc...) asparagine glycosylation sites follow: Asn118, Asn153, Asn187, Asn232, Asn256, Asn264, Asn293, Asn331, Asn360, Asn367, Asn400, Asn403, Asn474, Asn508, Asn513, Asn537, Asn564, Asn586, and Asn603.

The protein belongs to the lysophospholipase family.

The protein resides in the secreted. The catalysed reaction is a 1-acyl-sn-glycero-3-phosphocholine + H2O = sn-glycerol 3-phosphocholine + a fatty acid + H(+). In terms of biological role, catalyzes the release of fatty acids from lysophospholipids. The polypeptide is Probable lysophospholipase 5 (plb5) (Schizosaccharomyces pombe (strain 972 / ATCC 24843) (Fission yeast)).